The primary structure comprises 318 residues: COP9 signalosome complex subunit 6 (318 aa).

Residues 32 to 165 enclose the MPN domain; the sequence is VALHPLVILN…VSVYESVIDI (134 aa).

It belongs to the peptidase M67A family. CSN6 subfamily. As to quaternary structure, component of the CSN complex, probably composed of cops1, cops2, cops3, cops4, cops5, cops6, cops7, cops8 and cops9.

It localises to the cytoplasm. The protein resides in the nucleus. Functionally, component of the COP9 signalosome complex (CSN), a complex involved in various cellular and developmental processes. The CSN complex is an essential regulator of the ubiquitin (Ubl) conjugation pathway by mediating the deneddylation of the cullin subunits of E3 ligase complexes, leading to modify the Ubl ligase activity. This chain is COP9 signalosome complex subunit 6 (cops6), found in Xenopus laevis (African clawed frog).